The following is a 58-amino-acid chain: Keratin-associated protein 21-3 (58 aa).

As to quaternary structure, interacts with hair keratins.

Its function is as follows. In the hair cortex, hair keratin intermediate filaments are embedded in an interfilamentous matrix, consisting of hair keratin-associated proteins (KRTAP), which are essential for the formation of a rigid and resistant hair shaft through their extensive disulfide bond cross-linking with abundant cysteine residues of hair keratins. The matrix proteins include the high-sulfur and high-glycine-tyrosine keratins. The protein is Keratin-associated protein 21-3 (KRTAP21-3) of Homo sapiens (Human).